We begin with the raw amino-acid sequence, 262 residues long: Glutamine-binding protein (262 aa).

The N-terminal stretch at Met1 to Gly26 is a signal peptide. Cys27 carries the N-palmitoyl cysteine lipid modification. Cys27 carries the S-diacylglycerol cysteine lipid modification.

The protein belongs to the bacterial solute-binding protein 3 family.

Its subcellular location is the cell membrane. Involved in glutamine-transport system. Interacts with the glutamine-transport system GlnPQ. The chain is Glutamine-binding protein (glnH) from Geobacillus stearothermophilus (Bacillus stearothermophilus).